The primary structure comprises 264 residues: 3-methyl-2-oxobutanoate hydroxymethyltransferase (264 aa).

Residues D42 and D81 each coordinate Mg(2+). 3-methyl-2-oxobutanoate-binding positions include 42-43 (DS), D81, and K110. Residue E112 coordinates Mg(2+). Residue E179 is the Proton acceptor of the active site.

Belongs to the PanB family. In terms of assembly, homodecamer; pentamer of dimers. Mg(2+) serves as cofactor.

It is found in the cytoplasm. The enzyme catalyses 3-methyl-2-oxobutanoate + (6R)-5,10-methylene-5,6,7,8-tetrahydrofolate + H2O = 2-dehydropantoate + (6S)-5,6,7,8-tetrahydrofolate. It functions in the pathway cofactor biosynthesis; (R)-pantothenate biosynthesis; (R)-pantoate from 3-methyl-2-oxobutanoate: step 1/2. Catalyzes the reversible reaction in which hydroxymethyl group from 5,10-methylenetetrahydrofolate is transferred onto alpha-ketoisovalerate to form ketopantoate. This chain is 3-methyl-2-oxobutanoate hydroxymethyltransferase, found in Francisella tularensis subsp. tularensis (strain FSC 198).